The following is a 145-amino-acid chain: Protein MMF1, mitochondrial (145 aa).

The transit peptide at 1-17 directs the protein to the mitochondrion; the sequence is MFLRNSVLRTAPVLRRG.

It belongs to the RutC family.

It is found in the mitochondrion matrix. Plays a role in the maintenance of mitochondrial DNA. In Saccharomyces cerevisiae (strain ATCC 204508 / S288c) (Baker's yeast), this protein is Protein MMF1, mitochondrial (MMF1).